We begin with the raw amino-acid sequence, 732 residues long: Polyribonucleotide nucleotidyltransferase (732 aa).

D489 and D495 together coordinate Mg(2+). Residues 556-615 enclose the KH domain; that stretch reads PKIDTIQIDVDKIKIVIGKGGETIDKIIAETGVKIDIDEEGLVQIFSSDQAAIDRTKEII. In terms of domain architecture, S1 motif spans 625 to 693; the sequence is GEVYHAKVVR…DKGRVDASMK (69 aa). Positions 691-732 are disordered; it reads SMKALIPRPPKPEKKEEKASEAKEASNDQASKSQSETASEEK. Basic and acidic residues predominate over residues 700–716; it reads PKPEKKEEKASEAKEAS. Residues 717–732 show a composition bias toward polar residues; the sequence is NDQASKSQSETASEEK.

It belongs to the polyribonucleotide nucleotidyltransferase family. The cofactor is Mg(2+).

The protein localises to the cytoplasm. It carries out the reaction RNA(n+1) + phosphate = RNA(n) + a ribonucleoside 5'-diphosphate. Involved in mRNA degradation. Catalyzes the phosphorolysis of single-stranded polyribonucleotides processively in the 3'- to 5'-direction. This is Polyribonucleotide nucleotidyltransferase from Streptococcus uberis (strain ATCC BAA-854 / 0140J).